The primary structure comprises 403 residues: Phosphopentomutase (403 aa).

The Mn(2+) site is built by aspartate 13, aspartate 298, histidine 303, aspartate 339, histidine 340, and histidine 351.

It belongs to the phosphopentomutase family. The cofactor is Mn(2+).

It is found in the cytoplasm. It catalyses the reaction 2-deoxy-alpha-D-ribose 1-phosphate = 2-deoxy-D-ribose 5-phosphate. It carries out the reaction alpha-D-ribose 1-phosphate = D-ribose 5-phosphate. It participates in carbohydrate degradation; 2-deoxy-D-ribose 1-phosphate degradation; D-glyceraldehyde 3-phosphate and acetaldehyde from 2-deoxy-alpha-D-ribose 1-phosphate: step 1/2. Its function is as follows. Isomerase that catalyzes the conversion of deoxy-ribose 1-phosphate (dRib-1-P) and ribose 1-phosphate (Rib-1-P) to deoxy-ribose 5-phosphate (dRib-5-P) and ribose 5-phosphate (Rib-5-P), respectively. The protein is Phosphopentomutase of Streptococcus gordonii (strain Challis / ATCC 35105 / BCRC 15272 / CH1 / DL1 / V288).